The primary structure comprises 327 residues: Ubiquinone biosynthesis O-methyltransferase, mitochondrial (327 aa).

S-adenosyl-L-methionine is bound by residues R79, G142, D165, and F210. E211, E214, and H215 together coordinate Mg(2+).

It belongs to the class I-like SAM-binding methyltransferase superfamily. UbiG/COQ3 family. As to quaternary structure, component of a multi-subunit COQ enzyme complex, composed of at least COQ3, COQ4, COQ5, COQ6, COQ7 and COQ9. The cofactor is Mg(2+).

It is found in the mitochondrion inner membrane. The catalysed reaction is a 3,4-dihydroxy-5-(all-trans-polyprenyl)benzoate + S-adenosyl-L-methionine = a 4-hydroxy-3-methoxy-5-(all-trans-polyprenyl)benzoate + S-adenosyl-L-homocysteine + H(+). The enzyme catalyses a 3-demethylubiquinone + S-adenosyl-L-methionine = a ubiquinone + S-adenosyl-L-homocysteine. It carries out the reaction a 3-demethylubiquinol + S-adenosyl-L-methionine = a ubiquinol + S-adenosyl-L-homocysteine + H(+). The protein operates within cofactor biosynthesis; ubiquinone biosynthesis. O-methyltransferase required for two non-consecutive steps during ubiquinone biosynthesis. Catalyzes the 2 O-methylation of 3,4-dihydroxy-5-(all-trans-polyprenyl)benzoic acid into 4-hydroxy-3-methoxy-5-(all-trans-polyprenyl)benzoic acid. Also catalyzes the last step of ubiquinone biosynthesis by mediating methylation of 3-demethylubiquinone into ubiquinone. Also able to mediate the methylation of 3-demethylubiquinol into ubiquinol. In Candida albicans (Yeast), this protein is Ubiquinone biosynthesis O-methyltransferase, mitochondrial.